We begin with the raw amino-acid sequence, 327 residues long: Methionyl-tRNA formyltransferase (327 aa).

111-114 (SLLP) contributes to the (6S)-5,6,7,8-tetrahydrofolate binding site.

This sequence belongs to the Fmt family.

The enzyme catalyses L-methionyl-tRNA(fMet) + (6R)-10-formyltetrahydrofolate = N-formyl-L-methionyl-tRNA(fMet) + (6S)-5,6,7,8-tetrahydrofolate + H(+). Functionally, attaches a formyl group to the free amino group of methionyl-tRNA(fMet). The formyl group appears to play a dual role in the initiator identity of N-formylmethionyl-tRNA by promoting its recognition by IF2 and preventing the misappropriation of this tRNA by the elongation apparatus. The chain is Methionyl-tRNA formyltransferase from Synechococcus elongatus (strain ATCC 33912 / PCC 7942 / FACHB-805) (Anacystis nidulans R2).